The chain runs to 461 residues: Aspartyl/glutamyl-tRNA(Asn/Gln) amidotransferase subunit B (461 aa).

It belongs to the GatB/GatE family. GatB subfamily. Heterotrimer of A, B and C subunits.

It carries out the reaction L-glutamyl-tRNA(Gln) + L-glutamine + ATP + H2O = L-glutaminyl-tRNA(Gln) + L-glutamate + ADP + phosphate + H(+). It catalyses the reaction L-aspartyl-tRNA(Asn) + L-glutamine + ATP + H2O = L-asparaginyl-tRNA(Asn) + L-glutamate + ADP + phosphate + 2 H(+). Allows the formation of correctly charged Asn-tRNA(Asn) or Gln-tRNA(Gln) through the transamidation of misacylated Asp-tRNA(Asn) or Glu-tRNA(Gln) in organisms which lack either or both of asparaginyl-tRNA or glutaminyl-tRNA synthetases. The reaction takes place in the presence of glutamine and ATP through an activated phospho-Asp-tRNA(Asn) or phospho-Glu-tRNA(Gln). This chain is Aspartyl/glutamyl-tRNA(Asn/Gln) amidotransferase subunit B, found in Methanopyrus kandleri (strain AV19 / DSM 6324 / JCM 9639 / NBRC 100938).